Consider the following 714-residue polypeptide: MSHLITLATCNLNQWALDFEGNRDRILQSIKIAKERGARLRVGPELEITGYGCLDHFLENDVCLHSWEMYAQIIKNKETHGLILDIGMPVLHKNVRYNCRLLSLDGEILFIRPKIWLANDGNYREMRFFTPWMKPGVVEDFILPPEIQKVTGQRLVPFGDAVINSLDTCIGTETCEELFTPQSPHIAMSLDGVEIMTNSSGSHHELRKLNKRLDLILNATKRCGGVYLYANQRGCDGDRLYYDGCALIAINGTIVAQGSQFSLDDVEVVTATVDLEEVRSYRAAVMSRGLQASLAEIKFKRIDIPVELALMTSRFDPTVCPTKVREPFYHSPEEEIALGPACWMWDYLRRCNGTGFFLPLSGGIDSCATAMIVHSMCRLVTDAAQNGNEQVIKDVRKITRSGDDWIPDSPQDLASKIFHSCFMGTENSSKETRNRAKDLSNAIGSYHVDLKMDSLVSSVVSLFEVATGKKPIYKIFGGSQIENLALQNIQARLRMVLSYLFAQLLPWVRGIPNSGGLLVLGSANVDECLRGYLTKYDCSSADINPIGGISKTDLKRFIAYASKQYNMPILNDFLNATPTAELEPMTKDYVQSDEIDMGMTYEELGVFGYLRKVEKCGPYSMFLKLLHQWSPKLTPRQISEKVKRFFFFYAINRHKQTVLTPSYHAEQYSPEDNRFDLRPFLINPRFPWASRKIDEVVEQCEAHKGSTLDIMSID.

Residues 5–275 (ITLATCNLNQ…VEVVTATVDL (271 aa)) enclose the CN hydrolase domain. E45 acts as the Proton acceptor; for glutaminase activity in catalysis. K114 (for glutaminase activity) is an active-site residue. C175 (nucleophile; for glutaminase activity) is an active-site residue. A ligase region spans residues 329–714 (YHSPEEEIAL…GSTLDIMSID (386 aa)). Residue 359–366 (PLSGGIDS) participates in ATP binding. The active site involves S361.

In the C-terminal section; belongs to the NAD synthetase family.

It catalyses the reaction deamido-NAD(+) + L-glutamine + ATP + H2O = L-glutamate + AMP + diphosphate + NAD(+) + H(+). It functions in the pathway cofactor biosynthesis; NAD(+) biosynthesis; NAD(+) from deamido-NAD(+) (L-Gln route): step 1/1. This chain is Glutamine-dependent NAD(+) synthetase (QNS1), found in Saccharomyces cerevisiae (strain ATCC 204508 / S288c) (Baker's yeast).